The primary structure comprises 184 residues: Probable archaeosortase E (184 aa).

4 consecutive transmembrane segments (helical) span residues 27–47 (ILFL…LSYF), 86–106 (VVEE…IIVY), 114–134 (IIGI…IVLI), and 151–171 (IAGY…YLKI). The active-site Acyl-thioester intermediate is Cys-90. Arg-130 serves as the catalytic Proton donor.

The protein belongs to the exosortase/archaeosortase family. Archaeosortase E subfamily.

The protein resides in the cell membrane. Functionally, transpeptidase that recognizes and modifies its substrate by proteolytic cleavage of a sorting signal. Following cleavage, a covalent intermediate is formed via a thioester bond between the archaeosortase and its substrate, which is then transferred and covalently attached to the cell membrane. The protein is Probable archaeosortase E of Methanocaldococcus jannaschii (strain ATCC 43067 / DSM 2661 / JAL-1 / JCM 10045 / NBRC 100440) (Methanococcus jannaschii).